Reading from the N-terminus, the 245-residue chain is Probable phosphatase YE2421 (245 aa).

Positions 7, 9, 15, 40, 73, 101, 131, 192, and 194 each coordinate Zn(2+).

This sequence belongs to the PHP family. As to quaternary structure, homotrimer. The cofactor is Zn(2+).

The polypeptide is Probable phosphatase YE2421 (Yersinia enterocolitica serotype O:8 / biotype 1B (strain NCTC 13174 / 8081)).